A 292-amino-acid polypeptide reads, in one-letter code: Probable vesicular-fusion protein sec17 homolog (292 aa).

This sequence belongs to the SNAP family.

Its subcellular location is the membrane. Required for vesicular transport between the endoplasmic reticulum and the Golgi apparatus. This is Probable vesicular-fusion protein sec17 homolog from Neurospora crassa (strain ATCC 24698 / 74-OR23-1A / CBS 708.71 / DSM 1257 / FGSC 987).